Reading from the N-terminus, the 280-residue chain is Large ribosomal subunit protein uL2 (280 aa).

Disordered stretches follow at residues 1–58 and 226–280; these read MAIR…GGGH and MNPV…KHGR. 2 stretches are compositionally biased toward basic residues: residues 37-58 and 268-280; these read LHGH…GGGH and IVRR…KHGR.

It belongs to the universal ribosomal protein uL2 family. As to quaternary structure, part of the 50S ribosomal subunit. Forms a bridge to the 30S subunit in the 70S ribosome.

In terms of biological role, one of the primary rRNA binding proteins. Required for association of the 30S and 50S subunits to form the 70S ribosome, for tRNA binding and peptide bond formation. It has been suggested to have peptidyltransferase activity; this is somewhat controversial. Makes several contacts with the 16S rRNA in the 70S ribosome. The polypeptide is Large ribosomal subunit protein uL2 (Mycolicibacterium paratuberculosis (strain ATCC BAA-968 / K-10) (Mycobacterium paratuberculosis)).